The sequence spans 599 residues: Proline--tRNA ligase (599 aa).

The protein belongs to the class-II aminoacyl-tRNA synthetase family. ProS type 1 subfamily. In terms of assembly, homodimer.

The protein localises to the cytoplasm. The enzyme catalyses tRNA(Pro) + L-proline + ATP = L-prolyl-tRNA(Pro) + AMP + diphosphate. Catalyzes the attachment of proline to tRNA(Pro) in a two-step reaction: proline is first activated by ATP to form Pro-AMP and then transferred to the acceptor end of tRNA(Pro). As ProRS can inadvertently accommodate and process non-cognate amino acids such as alanine and cysteine, to avoid such errors it has two additional distinct editing activities against alanine. One activity is designated as 'pretransfer' editing and involves the tRNA(Pro)-independent hydrolysis of activated Ala-AMP. The other activity is designated 'posttransfer' editing and involves deacylation of mischarged Ala-tRNA(Pro). The misacylated Cys-tRNA(Pro) is not edited by ProRS. The chain is Proline--tRNA ligase from Prochlorococcus marinus (strain MIT 9313).